The chain runs to 416 residues: Formyl-CoA:oxalate CoA-transferase (416 aa).

CoA-binding positions include 17 to 18 (QS), Arg38, 72 to 75 (LNTK), 96 to 98 (NFH), His104, and 137 to 140 (KAYE). Residue Asp169 is the Nucleophile of the active site. Substrate is bound at residue 248-250 (GGQ). Position 273 to 275 (273 to 275 (QEQ)) interacts with CoA.

Belongs to the CoA-transferase III family. Frc subfamily. In terms of assembly, homodimer.

It catalyses the reaction formyl-CoA + oxalate = oxalyl-CoA + formate. The protein operates within metabolic intermediate degradation; oxalate degradation; CO(2) and formate from oxalate: step 1/2. Its function is as follows. Involved in the catabolism of oxalate and in the adapatation to low pH via the induction of the oxalate-dependent acid tolerance response (ATR). Catalyzes the transfer of the CoA moiety from formyl-CoA to oxalate. This is Formyl-CoA:oxalate CoA-transferase from Shigella boydii serotype 18 (strain CDC 3083-94 / BS512).